A 360-amino-acid polypeptide reads, in one-letter code: MPSTLQALTKKVLATQPIFKDDYCILERCGLWWHEAPITIHHTCIDKQILVKTASFKHGLTLNVALMKAVQENNHDLIELFTEWGADISFGLVTVNMECTQDLCQKLGARKALSENKILEIFYNVKYVKTSSNIILCHELLSNNPLFLNNAQLKLRIFGELDALSINITLDNISFNEMLTRYWYSMAILYKLTEAIQYFYQRYSHFKDWRLICGVAYNNVFDLHEIYNKEKTNIDIDEMMQLACMYDGNYTTIYYCCMLGADINRAMITSVMNFCEGNLFLCIDLGADAFKESIEIASQANNWILINILLFKNYSPDSSLLSLKTTDPEKINVLLDEEKYKSKNMLMYEESLFHIYGTNT.

Belongs to the asfivirus MGF 360 family.

In terms of biological role, plays a role in virus cell tropism, and may be required for efficient virus replication in macrophages. This Ornithodoros (relapsing fever ticks) protein is Protein MGF 360-1L.